We begin with the raw amino-acid sequence, 243 residues long: Sugar fermentation stimulation protein homolog (243 aa).

Belongs to the SfsA family.

This chain is Sugar fermentation stimulation protein homolog, found in Lacticaseibacillus casei (strain BL23) (Lactobacillus casei).